A 120-amino-acid polypeptide reads, in one-letter code: Prefoldin subunit beta (120 aa).

Belongs to the prefoldin subunit beta family. Heterohexamer of two alpha and four beta subunits.

It is found in the cytoplasm. Its function is as follows. Molecular chaperone capable of stabilizing a range of proteins. Seems to fulfill an ATP-independent, HSP70-like function in archaeal de novo protein folding. This Methanopyrus kandleri (strain AV19 / DSM 6324 / JCM 9639 / NBRC 100938) protein is Prefoldin subunit beta (pfdB).